A 408-amino-acid chain; its full sequence is CinA-like protein (408 aa).

It belongs to the CinA family.

This Thermotoga maritima (strain ATCC 43589 / DSM 3109 / JCM 10099 / NBRC 100826 / MSB8) protein is CinA-like protein.